The chain runs to 290 residues: Shikimate dehydrogenase (NADP(+)) (290 aa).

Residues 20–22 (SLS) and Thr67 each bind shikimate. The active-site Proton acceptor is Lys71. Asn92 and Asp107 together coordinate shikimate. NADP(+)-binding positions include 132–136 (GAGGA) and Met228. Shikimate is bound at residue Tyr230. Gly251 is a binding site for NADP(+).

It belongs to the shikimate dehydrogenase family. Homodimer.

It catalyses the reaction shikimate + NADP(+) = 3-dehydroshikimate + NADPH + H(+). Its pathway is metabolic intermediate biosynthesis; chorismate biosynthesis; chorismate from D-erythrose 4-phosphate and phosphoenolpyruvate: step 4/7. Its function is as follows. Involved in the biosynthesis of the chorismate, which leads to the biosynthesis of aromatic amino acids. Catalyzes the reversible NADPH linked reduction of 3-dehydroshikimate (DHSA) to yield shikimate (SA). This chain is Shikimate dehydrogenase (NADP(+)), found in Citrifermentans bemidjiense (strain ATCC BAA-1014 / DSM 16622 / JCM 12645 / Bem) (Geobacter bemidjiensis).